We begin with the raw amino-acid sequence, 671 residues long: UvrABC system protein C (671 aa).

One can recognise a GIY-YIG domain in the interval 16–95 (VEPGVYRFRD…IKEFDPRFNV (80 aa)). Positions 208–243 (DRLARDMEREMNQAAQELNFERAARLRDNISALQRA) constitute a UVR domain. The tract at residues 645-671 (SSAPSSGATEAVLPAMVENGVDDTPST) is disordered.

The protein belongs to the UvrC family. In terms of assembly, interacts with UvrB in an incision complex.

It localises to the cytoplasm. In terms of biological role, the UvrABC repair system catalyzes the recognition and processing of DNA lesions. UvrC both incises the 5' and 3' sides of the lesion. The N-terminal half is responsible for the 3' incision and the C-terminal half is responsible for the 5' incision. The sequence is that of UvrABC system protein C from Mycobacteroides abscessus (strain ATCC 19977 / DSM 44196 / CCUG 20993 / CIP 104536 / JCM 13569 / NCTC 13031 / TMC 1543 / L948) (Mycobacterium abscessus).